We begin with the raw amino-acid sequence, 1548 residues long: Lysine-specific demethylase 5D (1548 aa).

Positions 14-55 (CPVFEPSWAEFRDPLGYIAKIRPIAEKSGICKIRPPADWQPP) constitute a JmjN domain. An ARID domain is found at 79-169 (TRVKLNYLDQ…IIYPYEIFQS (91 aa)). Residues K205, K229, K244, and K279 each participate in a glycyl lysine isopeptide (Lys-Gly) (interchain with G-Cter in SUMO2) cross-link. A disordered region spans residues 208–229 (CYSRRGKRLQPEPEPTEEDIEK). 2 positions are modified to phosphoserine: S300 and S316. Residues 325–371 (VCRICSRGDEVDKFLLCDGCSDNYHIFCLLPPLSEVPKGVWRCPKCI) form a PHD-type 1 zinc finger. 2-oxoglutarate is bound at residue Y439. A JmjC domain is found at 467–633 (EYAACGWNLN…VGRQCIEHYR (167 aa)). Residues H513 and E515 each coordinate Fe cation. S521, N523, and K531 together coordinate 2-oxoglutarate. H601 lines the Fe cation pocket. The segment at 706–758 (CIKCKTTCFLSALACYDCPDSLVCLSHINDLCKCSRNRQYLRYRYTLDELPAM) adopts a C5HC2 zinc-finger fold. Phosphoserine is present on residues S889 and S893. K1123 participates in a covalent cross-link: Glycyl lysine isopeptide (Lys-Gly) (interchain with G-Cter in SUMO2). The PHD-type 2 zinc finger occupies 1182–1243 (ICICGQVCAG…DTKFLCPLCM (62 aa)). S1355 carries the phosphoserine modification. The disordered stretch occupies residues 1438–1468 (KPENPGNWSEEQTPERRRQRRQKVVLSRKGE).

This sequence belongs to the JARID1 histone demethylase family. As to quaternary structure, interacts withPCGF6, MSH5, ZMYND8, AR. L-ascorbate is required as a cofactor. Requires Fe(2+) as cofactor.

The protein localises to the nucleus. It carries out the reaction N(6),N(6),N(6)-trimethyl-L-lysyl(4)-[histone H3] + 3 2-oxoglutarate + 3 O2 = L-lysyl(4)-[histone H3] + 3 formaldehyde + 3 succinate + 3 CO2. In terms of biological role, histone demethylase that specifically demethylates 'Lys-4' of histone H3, thereby playing a central role in histone code. Does not demethylate histone H3 'Lys-9', H3 'Lys-27', H3 'Lys-36', H3 'Lys-79' or H4 'Lys-20'. Demethylates trimethylated and dimethylated but not monomethylated H3 'Lys-4'. May play a role in spermatogenesis. Involved in transcriptional repression of diverse metastasis-associated genes; in this function seems to cooperate with ZMYND8. Suppresses prostate cancer cell invasion. Regulates androgen receptor (AR) transcriptional activity by demethylating H3K4me3 active transcription marks. This is Lysine-specific demethylase 5D (Kdm5d) from Mus musculus (Mouse).